A 363-amino-acid polypeptide reads, in one-letter code: NADH-quinone oxidoreductase subunit H (363 aa).

10 helical membrane passes run 29–49, 62–82, 96–116, 127–147, 163–183, 202–222, 239–257, 264–286, 299–319, and 339–359; these read VLKILLIAVPVIVTVAFYVVW, GPMYVGMGIFQAFADVFKLLF, FIIAPLLTLAPAFAAWSVVPF, VGLLYLLAMTSLGVYGIILAG, AAQVVSYEIAMGFALVGVMIA, FFDWFLIPLFPLFIVYWVSGV, IVAGHMVEYSGGAFALFFL, ILVSFLISIFFLGGWLSPIQGWV, TGGWPWLLMKVFFFASAYIWF, and FIPLTIVWIAVTALMVFYGVI.

The protein belongs to the complex I subunit 1 family. NDH-1 is composed of 14 different subunits. Subunits NuoA, H, J, K, L, M, N constitute the membrane sector of the complex.

Its subcellular location is the cell inner membrane. The enzyme catalyses a quinone + NADH + 5 H(+)(in) = a quinol + NAD(+) + 4 H(+)(out). Functionally, NDH-1 shuttles electrons from NADH, via FMN and iron-sulfur (Fe-S) centers, to quinones in the respiratory chain. The immediate electron acceptor for the enzyme in this species is believed to be ubiquinone. Couples the redox reaction to proton translocation (for every two electrons transferred, four hydrogen ions are translocated across the cytoplasmic membrane), and thus conserves the redox energy in a proton gradient. This subunit may bind ubiquinone. This Xanthomonas campestris pv. campestris (strain B100) protein is NADH-quinone oxidoreductase subunit H.